A 438-amino-acid chain; its full sequence is Xylose isomerase (438 aa).

Catalysis depends on residues histidine 102 and aspartate 105. 7 residues coordinate Mg(2+): glutamate 233, glutamate 269, histidine 272, aspartate 297, aspartate 308, aspartate 310, and aspartate 340.

It belongs to the xylose isomerase family. Homotetramer. Requires Mg(2+) as cofactor.

The protein localises to the cytoplasm. The enzyme catalyses alpha-D-xylose = alpha-D-xylulofuranose. This is Xylose isomerase from Solibacter usitatus (strain Ellin6076).